We begin with the raw amino-acid sequence, 139 residues long: MLNRTVLVGRLTKDPELRSTPNGVNVGTFTLAVNRTFTNAQGEREADFINVVVFKKQAENVKNYLSKGSLAGVDGRLQTRSYDNKEGRRVFVTEVVADSVQFLEPKNNNKQNNQQHNGQTQTGNNPFDNTEEDFSDLPF.

One can recognise an SSB domain in the interval 1-104; sequence MLNRTVLVGR…VVADSVQFLE (104 aa). The interval 103–139 is disordered; it reads LEPKNNNKQNNQQHNGQTQTGNNPFDNTEEDFSDLPF. Residues 106–125 are compositionally biased toward low complexity; sequence KNNNKQNNQQHNGQTQTGNN. Over residues 129 to 139 the composition is skewed to acidic residues; that stretch reads NTEEDFSDLPF.

Homotetramer.

This Staphylococcus aureus (strain COL) protein is Single-stranded DNA-binding protein 2 (ssb-p).